The chain runs to 219 residues: MLIFSVLMYLGLLLAGASALPNGLSPRNNAFCAGFGLSCKWECWCTAHGTGNELRYATAAGCGDHLSKSYYDARAGHCLFSDDLRNQFYSHCSSLNNNMSCRSLSKRTIQDSATDTVDLGAELHRDDPPPTASDIGKRGKRPRPVMCQCVDTTNGGVRLDAVTRAACSIDSFIDGYYTEKDGFCRAKYSWDLFTSGQFYQACLRYSHAGTNCQPDPQYE.

A signal peptide spans methionine 1–alanine 19. The propeptide occupies leucine 20 to arginine 27. 4 cysteine pairs are disulfide-bonded: cysteine 32–cysteine 39, cysteine 43–cysteine 101, cysteine 45–cysteine 92, and cysteine 62–cysteine 78. Asparagine 98 carries N-linked (GlcNAc...) asparagine; by host glycosylation. Positions lysine 106 to arginine 138 are excised as a propeptide. The tract at residues glycine 120–proline 142 is disordered.

In terms of assembly, heterodimer of two small polypeptides that are not covalently linked.

The protein localises to the secreted. This protein is lethal to sensitive cells of the same or related species. The KP6 alpha subunit is known to recognize some cellular receptors before interaction of the complex with KP6 beta, precipitating cell death. The polypeptide is KP6 killer toxin (Ustilago maydis P6 virus (UmV6)).